A 63-amino-acid chain; its full sequence is SPbeta prophage-derived uncharacterized protein YotC (63 aa).

The chain is SPbeta prophage-derived uncharacterized protein YotC (yotC) from Bacillus subtilis (strain 168).